Consider the following 434-residue polypeptide: Tol-Pal system protein TolB (434 aa).

Positions 1–28 (MQQTCKRKIWMQISVALVTSLWMISAQA) are cleaved as a signal peptide.

The protein belongs to the TolB family. As to quaternary structure, the Tol-Pal system is composed of five core proteins: the inner membrane proteins TolA, TolQ and TolR, the periplasmic protein TolB and the outer membrane protein Pal. They form a network linking the inner and outer membranes and the peptidoglycan layer.

The protein localises to the periplasm. Its function is as follows. Part of the Tol-Pal system, which plays a role in outer membrane invagination during cell division and is important for maintaining outer membrane integrity. The polypeptide is Tol-Pal system protein TolB (Alcanivorax borkumensis (strain ATCC 700651 / DSM 11573 / NCIMB 13689 / SK2)).